The following is a 135-amino-acid chain: MNYFLKAPILGFEHINEVRLEKIDSLFSRLMGQTNSPMALDMVLVNPYCLREYSFVIPKYIELLLELDSHSKVEVYCVVVLQKNLEDSMVNFLAPLVFNSKNGFGAQVALSMMDYPDFGFRDPLKSFVVKERERA.

It belongs to the FliW family. In terms of assembly, interacts with translational regulator CsrA and flagellin(s).

It is found in the cytoplasm. Its function is as follows. Acts as an anti-CsrA protein, binds CsrA and prevents it from repressing translation of its target genes, one of which is flagellin. Binds to flagellin and participates in the assembly of the flagellum. The sequence is that of Flagellar assembly factor FliW 1 from Helicobacter pylori (strain HPAG1).